The following is a 479-amino-acid chain: Muscarinic acetylcholine receptor M4 (479 aa).

Topologically, residues 1–30 (MANFTPVNGSSANQSVRLVTTAHNHLETVE) are extracellular. N-linked (GlcNAc...) asparagine glycosylation is found at asparagine 8 and asparagine 13. A helical membrane pass occupies residues 31–53 (MVFIATVTGSLSLVTVVGNILVM). Topologically, residues 54–67 (LSIKVNRQLQTVNN) are cytoplasmic. Residues 68-88 (YFLFSLACADLIIGAFSMNLY) form a helical membrane-spanning segment. At 89-105 (TLYIIKGYWPLGAVVCD) the chain is on the extracellular side. The cysteines at positions 104 and 184 are disulfide-linked. A helical membrane pass occupies residues 106 to 127 (LWLALDYVVSNASVMNLLIISF). At 128–147 (DRYFCVTKPLTYPARRTTKM) the chain is on the cytoplasmic side. The helical transmembrane segment at 148-170 (AGLMIAAAWVLSFVLWAPAILFW) threads the bilayer. Topologically, residues 171-192 (QFVVGKRTVPDNQCFIQFLSNP) are extracellular. A helical membrane pass occupies residues 193–215 (AVTFGTAIAAFYLPVVIMTVLYI). The Cytoplasmic segment spans residues 216-401 (HISLASRSRV…AARERKVTRT (186 aa)). Residues 271–334 (LEEAPPPALP…APTLQPRTLN (64 aa)) form a disordered region. The span at 274–285 (APPPALPPPPRP) shows a compositional bias: pro residues. The span at 293–303 (NESSSGSATQN) shows a compositional bias: polar residues. Over residues 310–333 (TELSTTEAATTPALPAPTLQPRTL) the composition is skewed to low complexity. The chain crosses the membrane as a helical span at residues 402-422 (IFAILLAFILTWTPYNVMVLV). At 423–436 (NTFCQSCIPERVWS) the chain is on the extracellular side. A helical membrane pass occupies residues 437 to 456 (IGYWLCYVNSTINPACYALC). Topologically, residues 457–479 (NATFKKTFRHLLLCQYRNIGTAR) are cytoplasmic. A phosphothreonine mark is found at threonine 459, threonine 463, and threonine 477.

This sequence belongs to the G-protein coupled receptor 1 family. Muscarinic acetylcholine receptor subfamily. CHRM4 sub-subfamily.

The protein resides in the cell membrane. Its subcellular location is the postsynaptic cell membrane. The muscarinic acetylcholine receptor mediates various cellular responses, including inhibition of adenylate cyclase, breakdown of phosphoinositides and modulation of potassium channels through the action of G proteins. Primary transducing effect is inhibition of adenylate cyclase. This chain is Muscarinic acetylcholine receptor M4 (Chrm4), found in Mus musculus (Mouse).